The sequence spans 331 residues: DNA-directed RNA polymerase subunit alpha (331 aa).

Residues 1-237 (MQSSVTEFLI…NQLESFVYLR (237 aa)) are alpha N-terminal domain (alpha-NTD). An alpha C-terminal domain (alpha-CTD) region spans residues 251 to 331 (FDPILLRPVD…NWPPDNILDN (81 aa)).

This sequence belongs to the RNA polymerase alpha chain family. Homodimer. The RNAP catalytic core consists of 2 alpha, 1 beta, 1 beta' and 1 omega subunit. When a sigma factor is associated with the core the holoenzyme is formed, which can initiate transcription.

It carries out the reaction RNA(n) + a ribonucleoside 5'-triphosphate = RNA(n+1) + diphosphate. Its function is as follows. DNA-dependent RNA polymerase catalyzes the transcription of DNA into RNA using the four ribonucleoside triphosphates as substrates. The sequence is that of DNA-directed RNA polymerase subunit alpha from Buchnera aphidicola subsp. Baizongia pistaciae (strain Bp).